The chain runs to 203 residues: Leucyl/phenylalanyl-tRNA--protein transferase (203 aa).

The protein belongs to the L/F-transferase family.

Its subcellular location is the cytoplasm. The enzyme catalyses N-terminal L-lysyl-[protein] + L-leucyl-tRNA(Leu) = N-terminal L-leucyl-L-lysyl-[protein] + tRNA(Leu) + H(+). It catalyses the reaction N-terminal L-arginyl-[protein] + L-leucyl-tRNA(Leu) = N-terminal L-leucyl-L-arginyl-[protein] + tRNA(Leu) + H(+). It carries out the reaction L-phenylalanyl-tRNA(Phe) + an N-terminal L-alpha-aminoacyl-[protein] = an N-terminal L-phenylalanyl-L-alpha-aminoacyl-[protein] + tRNA(Phe). Its function is as follows. Functions in the N-end rule pathway of protein degradation where it conjugates Leu, Phe and, less efficiently, Met from aminoacyl-tRNAs to the N-termini of proteins containing an N-terminal arginine or lysine. The chain is Leucyl/phenylalanyl-tRNA--protein transferase from Chelativorans sp. (strain BNC1).